An 83-amino-acid polypeptide reads, in one-letter code: Hainantoxin-III 2 (83 aa).

A signal peptide spans 1 to 21 (MKASMYLALAGLVLLFVVGYA). The propeptide occupies 22–48 (SESEEKEFPRELLSKIFAVDDFKGEER). Disulfide bonds link Cys50-Cys65, Cys57-Cys70, and Cys64-Cys77. Residue Leu81 is modified to Leucine amide.

This sequence belongs to the neurotoxin 10 (Hwtx-1) family. 15 (Hntx-3) subfamily. Monomer. Expressed by the venom gland.

Its subcellular location is the secreted. Functionally, selective antagonist of neuronal tetrodotoxin (TTX)-sensitive voltage-gated sodium channels (IC(50)=1270 nM on Nav1.1/SCN1A, 270 nM on Nav1.2/SCN2A, 491 nM on Nav1.3/SCN3A and 232 nM on Nav1.7/SCN9A). This toxin suppress Nav1.7 current amplitude without significantly altering the activation, inactivation, and repriming kinetics. Short extreme depolarizations partially activate the toxin-bound channel, indicating voltage-dependent inhibition of this toxin. This toxin increases the deactivation of the Nav1.7 current after extreme depolarizations. The toxin-Nav1.7 complex is gradually dissociated upon prolonged strong depolarizations in a voltage-dependent manner, and the unbound toxin rebinds to Nav1.7 after a long repolarization. Moreover, analysis of chimeric channels showed that the DIIS3-S4 linker is critical for toxin binding to Nav1.7. These data are consistent with this toxin interacting with Nav1.7 site 4 and trapping the domain II voltage sensor in the closed state. The polypeptide is Hainantoxin-III 2 (Cyriopagopus hainanus (Chinese bird spider)).